The following is a 282-amino-acid chain: ESX-1 secretion-associated protein EspG1 (282 aa).

This sequence belongs to the EspG family. In terms of assembly, interacts specifically with ESX-1-dependent PE/PPE proteins.

It localises to the cytoplasm. Functionally, part of the ESX-1 / type VII specialized secretion system (T7SS), which exports several proteins including EsxA and EsxB. Specific chaperone for cognate PE/PPE proteins, plays an important role in preventing aggregation of PE/PPE dimers. Also plays a role in DNA conjugation, in at least recipient strain. This is ESX-1 secretion-associated protein EspG1 from Mycolicibacterium smegmatis (strain ATCC 700084 / mc(2)155) (Mycobacterium smegmatis).